The following is a 268-amino-acid chain: MDRYQATFERLAAQKQGAFVPFVTVCDPNPELSLKIMDTLVQAGADALELGIPFSDPLADGPTIQGANIRALDSGATPDICFDLIGQIRAKYPDLPIGLLMYANLVYSRGIENFYQRCAQAGIDSVLIADVPTNESAEFVAAAEKFGVHPIFIAPPTASDETLKQVSQLGGGYTYLLSRAGVTGAETKANMPVGDMLAKLEQFNAPPALLGFGISEPEQVKQAIDAGAAGAISGSAVVKIIESHLNEPDAMLTALANFVSSMKSATQK.

Catalysis depends on proton acceptor residues Glu-49 and Asp-60.

Belongs to the TrpA family. Tetramer of two alpha and two beta chains.

It carries out the reaction (1S,2R)-1-C-(indol-3-yl)glycerol 3-phosphate + L-serine = D-glyceraldehyde 3-phosphate + L-tryptophan + H2O. The protein operates within amino-acid biosynthesis; L-tryptophan biosynthesis; L-tryptophan from chorismate: step 5/5. The alpha subunit is responsible for the aldol cleavage of indoleglycerol phosphate to indole and glyceraldehyde 3-phosphate. This is Tryptophan synthase alpha chain from Vibrio vulnificus (strain YJ016).